Consider the following 130-residue polypeptide: Transcription antitermination protein NusB (130 aa).

It belongs to the NusB family.

Involved in transcription antitermination. Required for transcription of ribosomal RNA (rRNA) genes. Binds specifically to the boxA antiterminator sequence of the ribosomal RNA (rrn) operons. The polypeptide is Transcription antitermination protein NusB (Geobacillus kaustophilus (strain HTA426)).